We begin with the raw amino-acid sequence, 63 residues long: Large ribosomal subunit protein uL29 (63 aa).

Belongs to the universal ribosomal protein uL29 family.

This is Large ribosomal subunit protein uL29 from Bdellovibrio bacteriovorus (strain ATCC 15356 / DSM 50701 / NCIMB 9529 / HD100).